We begin with the raw amino-acid sequence, 84 residues long: Acyl carrier protein homolog (84 aa).

The 76-residue stretch at 4-79 (RDILLKIKEI…ELIAEVKHLI (76 aa)) folds into the Carrier domain. At serine 39 the chain carries O-(pantetheine 4'-phosphoryl)serine.

4'-phosphopantetheine is transferred from CoA to a specific serine of the apo-ACP-like protein.

The protein operates within lipid metabolism; fatty acid biosynthesis. Its function is as follows. Carrier of the growing fatty acid chain in fatty acid biosynthesis. In Mycoplasma pneumoniae (strain ATCC 29342 / M129 / Subtype 1) (Mycoplasmoides pneumoniae), this protein is Acyl carrier protein homolog.